The primary structure comprises 217 residues: uncharacterized protein (217 aa).

Residues 26-48 (VFMRGYVVGLVLALMLVTAPAMA) traverse the membrane as a helical segment.

It is found in the membrane. This is an uncharacterized protein from Archaeoglobus fulgidus (strain ATCC 49558 / DSM 4304 / JCM 9628 / NBRC 100126 / VC-16).